A 143-amino-acid polypeptide reads, in one-letter code: MFMGEYQHNIDIKGRLIVPAKFRELLGDNFVITRGLDKCLFAYPQEEWKKLEEKLQTLPLTKKDARSFTRFFFSGASECELDKQGRINIPSNLLQYADLEKETVIIGVSSRIEIWSKSEWDNVFNEAEESFADLAENMIGFDI.

2 consecutive SpoVT-AbrB domains span residues 5-47 (EYQH…PQEE) and 76-119 (ASEC…SKSE).

Belongs to the MraZ family. Forms oligomers.

Its subcellular location is the cytoplasm. It is found in the nucleoid. This chain is Transcriptional regulator MraZ, found in Listeria welshimeri serovar 6b (strain ATCC 35897 / DSM 20650 / CCUG 15529 / CIP 8149 / NCTC 11857 / SLCC 5334 / V8).